A 209-amino-acid chain; its full sequence is Ribosomal RNA large subunit methyltransferase E (209 aa).

S-adenosyl-L-methionine-binding residues include G63, W65, D83, D99, and D124. K164 (proton acceptor) is an active-site residue.

The protein belongs to the class I-like SAM-binding methyltransferase superfamily. RNA methyltransferase RlmE family.

The protein resides in the cytoplasm. The enzyme catalyses uridine(2552) in 23S rRNA + S-adenosyl-L-methionine = 2'-O-methyluridine(2552) in 23S rRNA + S-adenosyl-L-homocysteine + H(+). Functionally, specifically methylates the uridine in position 2552 of 23S rRNA at the 2'-O position of the ribose in the fully assembled 50S ribosomal subunit. In Shewanella sp. (strain MR-7), this protein is Ribosomal RNA large subunit methyltransferase E.